We begin with the raw amino-acid sequence, 173 residues long: Large ribosomal subunit protein bL9 (173 aa).

This sequence belongs to the bacterial ribosomal protein bL9 family.

Functionally, binds to the 23S rRNA. This chain is Large ribosomal subunit protein bL9, found in Rickettsia bellii (strain OSU 85-389).